The primary structure comprises 400 residues: Phosphoglycerate kinase (400 aa).

Substrate is bound by residues 22–24 (DFN), R38, 61–64 (HLGR), R119, and R152. ATP is bound by residues K205, G296, E327, and 353–356 (GGDT).

The protein belongs to the phosphoglycerate kinase family. As to quaternary structure, monomer.

The protein localises to the cytoplasm. The catalysed reaction is (2R)-3-phosphoglycerate + ATP = (2R)-3-phospho-glyceroyl phosphate + ADP. It functions in the pathway carbohydrate degradation; glycolysis; pyruvate from D-glyceraldehyde 3-phosphate: step 2/5. This chain is Phosphoglycerate kinase, found in Campylobacter jejuni subsp. jejuni serotype O:6 (strain 81116 / NCTC 11828).